The following is a 380-amino-acid chain: Chaperone protein DnaJ (380 aa).

Residues 6-71 (DYYAILEVSR…QKRAAYDQYG (66 aa)) form the J domain. The segment at 136–215 (GVKKDVRVIT…CHGEGTVEKE (80 aa)) adopts a CR-type zinc-finger fold. Zn(2+) is bound by residues Cys-149, Cys-152, Cys-167, Cys-170, Cys-189, Cys-192, Cys-203, and Cys-206. CXXCXGXG motif repeat units lie at residues 149 to 156 (CEACHGTG), 167 to 174 (CPSCHGAG), 189 to 196 (CPTCHGAG), and 203 to 210 (CKVCHGEG).

Belongs to the DnaJ family. Homodimer. The cofactor is Zn(2+).

Its subcellular location is the cytoplasm. Functionally, participates actively in the response to hyperosmotic and heat shock by preventing the aggregation of stress-denatured proteins and by disaggregating proteins, also in an autonomous, DnaK-independent fashion. Unfolded proteins bind initially to DnaJ; upon interaction with the DnaJ-bound protein, DnaK hydrolyzes its bound ATP, resulting in the formation of a stable complex. GrpE releases ADP from DnaK; ATP binding to DnaK triggers the release of the substrate protein, thus completing the reaction cycle. Several rounds of ATP-dependent interactions between DnaJ, DnaK and GrpE are required for fully efficient folding. Also involved, together with DnaK and GrpE, in the DNA replication of plasmids through activation of initiation proteins. The sequence is that of Chaperone protein DnaJ from Acetobacter pasteurianus (strain NBRC 105184 / IFO 3283-01).